A 342-amino-acid chain; its full sequence is Methyltransferase ungE' (342 aa).

Belongs to the methyltransferase superfamily.

It participates in secondary metabolite biosynthesis. Functionally, methyltransferase; part of the gene cluster that mediates the biosynthesis of the unguisins, gamma-aminobutyric acid (GABA)-containing fungal cyclic heptapeptides with the amino acid sequence cyclo-(D-Ala1-D-Val2-L-Leu3-beta-MePhe4-D-Ala5-D-Trp6-GABA7) for unguisin H and cyclo-(D-Ala1-D-Ala2-L-Leu3-beta-MePhe4-D-Ala5-D-Trp6-GABA7) for unguisin I. Within the pathway, the methyltransferase ungE' is probably involved in the synthesis of the (2R,3R)-beta-methylphenylalanine residue incorporated by the module 4 of the nonribosomal peptide synthetase (NRPS) ungA'. The alanine racemase ungC' catalyzes the interconversion of L-alanine and D-alanine, providing the D-alanine which is accepted by the first adenylation domain of ungA'. UngA' is the main enzyme within the cluster which condenses the 7 residues using its respective 7 modules. The terminal condensation domain (Ct) is involved in cyclization with D-alanine and thereby releasing of unguisins H and I. Finally, the hydrolase ungD' catalyzes the hydrolysis between the D-tryptophan and GABA residues of unguisins H and I to produce the corresponding linear peptides. The protein is Methyltransferase ungE' of Aspergillus campestris (strain IBT 28561).